We begin with the raw amino-acid sequence, 206 residues long: Large ribosomal subunit protein uL4 (206 aa).

Belongs to the universal ribosomal protein uL4 family. In terms of assembly, part of the 50S ribosomal subunit.

Its function is as follows. One of the primary rRNA binding proteins, this protein initially binds near the 5'-end of the 23S rRNA. It is important during the early stages of 50S assembly. It makes multiple contacts with different domains of the 23S rRNA in the assembled 50S subunit and ribosome. Functionally, forms part of the polypeptide exit tunnel. This is Large ribosomal subunit protein uL4 from Afipia carboxidovorans (strain ATCC 49405 / DSM 1227 / KCTC 32145 / OM5) (Oligotropha carboxidovorans).